The following is a 144-amino-acid chain: Bacilliredoxin BCE_2233 (144 aa).

The protein belongs to the bacilliredoxin family.

This chain is Bacilliredoxin BCE_2233, found in Bacillus cereus (strain ATCC 10987 / NRS 248).